The following is a 247-amino-acid chain: Probable membrane transporter protein y4hK (247 aa).

A run of 6 helical transmembrane segments spans residues 5–25, 31–51, 74–94, 121–141, 202–222, and 227–247; these read AIGLAIAFFVIALAYAAVGQA, IAAMALSGFSPLAIKPTALAL, VYPFAILGFPASALGGSVHLP, SALVITIPKTPPLHAALITGA, FLPWWLIAVAAGGSIGALIGS, and ASWLRVILSVLLMVSGLKLLW.

Belongs to the 4-toluene sulfonate uptake permease (TSUP) (TC 2.A.102) family.

It localises to the cell membrane. This chain is Probable membrane transporter protein y4hK, found in Sinorhizobium fredii (strain NBRC 101917 / NGR234).